Reading from the N-terminus, the 601-residue chain is ATP-dependent lipid A-core flippase (601 aa).

An ABC transmembrane type-1 domain is found at 28 to 328; it reads LLSVVGLIVY…LTRVNAEFQR (301 aa). Transmembrane regions (helical) follow at residues 32-52, 81-101, 160-180, 183-203, 267-287, and 296-316; these read VGLI…GPFI, VLLM…FANF, ALIS…LMFY, WKLS…ITIV, AVSQ…VLYA, and DLTA…LQPI. The ABC transporter domain occupies 360–597; sequence LRFDNVSFSY…GGMYAKLYQM (238 aa). Position 394–401 (394–401) interacts with ATP; that stretch reads GRSGSGKS.

The protein belongs to the ABC transporter superfamily. Lipid exporter (TC 3.A.1.106) family. Homodimer.

The protein resides in the cell inner membrane. It carries out the reaction ATP + H2O + lipid A-core oligosaccharideSide 1 = ADP + phosphate + lipid A-core oligosaccharideSide 2.. Involved in lipopolysaccharide (LPS) biosynthesis. Translocates lipid A-core from the inner to the outer leaflet of the inner membrane. Transmembrane domains (TMD) form a pore in the inner membrane and the ATP-binding domain (NBD) is responsible for energy generation. This chain is ATP-dependent lipid A-core flippase, found in Shewanella oneidensis (strain ATCC 700550 / JCM 31522 / CIP 106686 / LMG 19005 / NCIMB 14063 / MR-1).